We begin with the raw amino-acid sequence, 337 residues long: Neurogenic differentiation factor 6 (337 aa).

The tract at residues 28–80 (QKQIKKPESFPKQVVLRGKSIKRAPGEETEKEEEEEDREEEDENGLSRRRGLR) is disordered. Over residues 54–71 (EETEKEEEEEDREEEDEN) the composition is skewed to acidic residues. Residues 80 to 86 (RKKKTTK) carry the Nuclear localization signal motif. A bHLH domain is found at 94 to 146 (FRRQEANARERNRMHGLNDALDNLRKVVPCYSKTQKLSKIETLRLAKNYIWAL).

As to quaternary structure, efficient DNA binding requires dimerization with another bHLH protein. As to expression, specific to the nervous system of both embryos and adults. Highest levels in the cortical plate of the cerebrum.

Its subcellular location is the nucleus. In terms of biological role, activates E box-dependent transcription in collaboration with TCF3/E47. May be a trans-acting factor involved in the development and maintenance of the mammalian nervous system. Transactivates the promoter of its own gene. This chain is Neurogenic differentiation factor 6 (Neurod6), found in Mus musculus (Mouse).